Consider the following 194-residue polypeptide: Peptidyl-tRNA hydrolase (194 aa).

Tyrosine 17 is a binding site for tRNA. Histidine 22 functions as the Proton acceptor in the catalytic mechanism. Residues phenylalanine 68, asparagine 70, and asparagine 116 each contribute to the tRNA site.

Belongs to the PTH family. In terms of assembly, monomer.

It localises to the cytoplasm. The enzyme catalyses an N-acyl-L-alpha-aminoacyl-tRNA + H2O = an N-acyl-L-amino acid + a tRNA + H(+). Functionally, hydrolyzes ribosome-free peptidyl-tRNAs (with 1 or more amino acids incorporated), which drop off the ribosome during protein synthesis, or as a result of ribosome stalling. In terms of biological role, catalyzes the release of premature peptidyl moieties from peptidyl-tRNA molecules trapped in stalled 50S ribosomal subunits, and thus maintains levels of free tRNAs and 50S ribosomes. The polypeptide is Peptidyl-tRNA hydrolase (Actinobacillus pleuropneumoniae serotype 5b (strain L20)).